A 916-amino-acid chain; its full sequence is Protein translocase subunit SecA (916 aa).

ATP contacts are provided by residues Gln87, 105-109 (GEGKT), and Asp512. Residues 857–916 (QHAEAPSMEQAVAGEEEELPEGPAPVVPLEPVRNEQKIGRNEPCPCGSGKKYKHCHGQLD) form a disordered region. 4 residues coordinate Zn(2+): Cys900, Cys902, Cys911, and His912. Over residues 906 to 916 (KKYKHCHGQLD) the composition is skewed to basic residues.

It belongs to the SecA family. Monomer and homodimer. Part of the essential Sec protein translocation apparatus which comprises SecA, SecYEG and auxiliary proteins SecDF-YajC and YidC. The cofactor is Zn(2+).

It is found in the cell inner membrane. Its subcellular location is the cytoplasm. It catalyses the reaction ATP + H2O + cellular proteinSide 1 = ADP + phosphate + cellular proteinSide 2.. In terms of biological role, part of the Sec protein translocase complex. Interacts with the SecYEG preprotein conducting channel. Has a central role in coupling the hydrolysis of ATP to the transfer of proteins into and across the cell membrane, serving both as a receptor for the preprotein-SecB complex and as an ATP-driven molecular motor driving the stepwise translocation of polypeptide chains across the membrane. The protein is Protein translocase subunit SecA of Pseudomonas aeruginosa (strain LESB58).